The primary structure comprises 173 residues: Photosystem I assembly protein Ycf3 (173 aa).

TPR repeat units follow at residues 35-68 (AYIY…EENK), 72-105 (GETL…NPKQ), and 120-153 (GRYA…YPGG).

This sequence belongs to the Ycf3 family.

The protein localises to the cellular thylakoid membrane. In terms of biological role, essential for the assembly of the photosystem I (PSI) complex. May act as a chaperone-like factor to guide the assembly of the PSI subunits. The protein is Photosystem I assembly protein Ycf3 of Prochlorococcus marinus (strain MIT 9215).